The primary structure comprises 447 residues: Putative bacteriocin-SkfA transport system permease protein SkfF (447 aa).

Over 1 to 3 (MPF) the chain is Cytoplasmic. Residues 4-22 (LIMLLFVGAIGFQVSFVSR) form a helical membrane-spanning segment. The Extracellular segment spans residues 23-29 (STTWDMS). The chain crosses the membrane as a helical span at residues 30–50 (IAGWVLTGVFILYTAFGLFSN). Topologically, residues 51 to 59 (RLPSQMADI) are cytoplasmic. A helical transmembrane segment spans residues 60 to 80 (IWLYGTATSFSKVVYSVLFFS). The Extracellular portion of the chain corresponds to 81-85 (VTWKA). Residues 86–104 (LLWIISAIFGDVLIVLLSG) traverse the membrane as a helical segment. Topologically, residues 105–113 (DHINLLGRS) are cytoplasmic. Residues 114 to 134 (IIFVGLFFIAEVWLMSVSCAR) form a helical membrane-spanning segment. At 135–141 (TVKKMKR) the chain is on the extracellular side. A helical membrane pass occupies residues 142–160 (VYVLVFLLMLGIYSICLYR). The Cytoplasmic segment spans residues 161–189 (FFFLQHSSGIWESIARFISGVGLVFDTLS). A helical transmembrane segment spans residues 190–208 (PLYVVVFIGIITVSFMTIA). Topologically, residues 209–247 (FTSRQVEMKESLVKEAEFWEEFQERQFGSGQIIQKPKTT) are extracellular. The chain crosses the membrane as a helical span at residues 248–268 (WWGLQGLNGIWSFLWLELLLF). The Cytoplasmic portion of the chain corresponds to 269–297 (KKYLFFHSIHTVMLSGVFYVVIFMYPEWF). The helical transmembrane segment at 298–318 (YLLFFLIVSAVMLSSYYSGIV) threads the bilayer. At 319–341 (RHSQSGTLHLFPGALWKKIIILE) the chain is on the extracellular side. A helical membrane pass occupies residues 342–360 (LTNTVWLYILYCVSITFMA). The Cytoplasmic segment spans residues 361 to 363 (VGN). Residues 364–382 (LVYWYIYGLGIYIWFMTIR) form a helical membrane-spanning segment. Over 383-404 (LFAFTHTNRNDIKLSLPQYYKS) the chain is Extracellular. The helical transmembrane segment at 405–423 (FFMALGLSGICLYVIHLLT) threads the bilayer. Over 424 to 426 (ADW) the chain is Cytoplasmic. The chain crosses the membrane as a helical span at residues 427–447 (YTLVVVVCIGSLSWCLFYRFR).

The protein resides in the cell membrane. Its function is as follows. Probably part of the ABC transporter SkfEF involved in the export of the bacteriocin SKF. Probably responsible for the translocation of bacteriocin SkfA across the membrane. This Bacillus subtilis (strain 168) protein is Putative bacteriocin-SkfA transport system permease protein SkfF.